The chain runs to 126 residues: Ribulose bisphosphate carboxylase small subunit, chloroplastic 1 (126 aa).

Belongs to the RuBisCO small chain family. In terms of assembly, heterohexadecamer of 8 large and 8 small subunits.

It localises to the plastid. It is found in the chloroplast. Functionally, ruBisCO catalyzes two reactions: the carboxylation of D-ribulose 1,5-bisphosphate, the primary event in carbon dioxide fixation, as well as the oxidative fragmentation of the pentose substrate. Both reactions occur simultaneously and in competition at the same active site. Although the small subunit is not catalytic it is essential for maximal activity. This Acetabularia peniculus (Green alga) protein is Ribulose bisphosphate carboxylase small subunit, chloroplastic 1.